The chain runs to 231 residues: Cytidylate kinase 1 (231 aa).

7–15 (GPSGAGKGT) contacts ATP.

The protein belongs to the cytidylate kinase family. Type 1 subfamily.

It localises to the cytoplasm. It carries out the reaction CMP + ATP = CDP + ADP. It catalyses the reaction dCMP + ATP = dCDP + ADP. This Haemophilus influenzae (strain ATCC 51907 / DSM 11121 / KW20 / Rd) protein is Cytidylate kinase 1.